Here is a 111-residue protein sequence, read N- to C-terminus: Cornifelin homolog A (111 aa).

Belongs to the cornifelin family.

The protein is Cornifelin homolog A (cnfn-a) of Xenopus laevis (African clawed frog).